Reading from the N-terminus, the 3640-residue chain is Serine/threonine-protein kinase SMG1 (3640 aa).

The segment covering Asn21–Gln34 has biased composition (polar residues). The interval Asn21–Val41 is disordered. An FAT domain is found at Tyr1495–Ser1843. An HEAT repeat occupies Ala1794 to Ser1829. The tract at residues Gly1870 to Gly1890 is disordered. A compositionally biased stretch (low complexity) spans Gly1874–Ser1887. The region spanning Val2102–Phe2441 is the PI3K/PI4K catalytic domain. Residues Ile2108–Lys2114 form a G-loop region. The catalytic loop stretch occupies residues Gly2310–Asn2318. The activation loop stretch occupies residues His2330–Thr2354. The FATC domain occupies Arg3608–Val3640.

This sequence belongs to the PI3/PI4-kinase family. Mn(2+) serves as cofactor. Post-translationally, autophosphorylated.

It is found in the nucleus. The protein resides in the cytoplasm. The enzyme catalyses L-seryl-[protein] + ATP = O-phospho-L-seryl-[protein] + ADP + H(+). It catalyses the reaction L-threonyl-[protein] + ATP = O-phospho-L-threonyl-[protein] + ADP + H(+). Its function is as follows. Serine/threonine protein kinase involved in both mRNA surveillance and genotoxic stress response pathways. Recognizes the substrate consensus sequence [ST]-Q. Plays a central role in nonsense-mediated decay (NMD) of mRNAs containing premature stop codons by phosphorylating UPF1/RENT1. The sequence is that of Serine/threonine-protein kinase SMG1 from Danio rerio (Zebrafish).